The sequence spans 211 residues: MNKAKRLEILTRLRENNPHPTTELNFSSPFELLIAVLLSAQATDVSVNKATAKLYPVANTPAAMLELGVEGVKTYIKTIGLYNSKAENIIKTCRILLEQHNGEVPEDRAALEALPGVGRKTANVVLNTAFGWPTIAVDTHIFRVCNRTQFAPGKNVEQVEEKLLKVVPAEFKVDCHHWLILHGRYTCIARKPRCGSCIIEDLCEYKEKVDI.

One can recognise a HhH domain in the interval 108–127; the sequence is RAALEALPGVGRKTANVVLN. [4Fe-4S] cluster contacts are provided by C187, C194, C197, and C203.

It belongs to the Nth/MutY family. It depends on [4Fe-4S] cluster as a cofactor.

The enzyme catalyses 2'-deoxyribonucleotide-(2'-deoxyribose 5'-phosphate)-2'-deoxyribonucleotide-DNA = a 3'-end 2'-deoxyribonucleotide-(2,3-dehydro-2,3-deoxyribose 5'-phosphate)-DNA + a 5'-end 5'-phospho-2'-deoxyribonucleoside-DNA + H(+). DNA repair enzyme that has both DNA N-glycosylase activity and AP-lyase activity. The DNA N-glycosylase activity releases various damaged pyrimidines from DNA by cleaving the N-glycosidic bond, leaving an AP (apurinic/apyrimidinic) site. The AP-lyase activity cleaves the phosphodiester bond 3' to the AP site by a beta-elimination, leaving a 3'-terminal unsaturated sugar and a product with a terminal 5'-phosphate. This is Endonuclease III from Escherichia coli O6:H1 (strain CFT073 / ATCC 700928 / UPEC).